The primary structure comprises 1029 residues: FYVE, RhoGEF and PH domain-containing protein tag-77 (1029 aa).

Basic and acidic residues-rich tracts occupy residues 1-12 (MKYDMNHRKNSD) and 20-39 (TVKE…DNRF). Disordered stretches follow at residues 1-155 (MKYD…ATSE), 185-254 (VPRM…ERKT), and 279-370 (NNGV…EKDD). The segment covering 42 to 56 (QPPPPPSPRRAPPPP) has biased composition (pro residues). Low complexity-rich tracts occupy residues 76-85 (PPSSSESSEN) and 122-133 (SSSTSDVSSQNS). Composition is skewed to polar residues over residues 141–155 (SCTT…ATSE) and 200–211 (PISQVSTLSQVS). Residues 212–227 (DEFDEGDTSASDEESM) are compositionally biased toward acidic residues. A compositionally biased stretch (low complexity) spans 316-334 (SPTSGMSSSSTDDFSRITS). Positions 335–347 (MTSDRSSILTSHS) are enriched in polar residues. Positions 375–572 (KLHYAAVEFL…ENVTQAVNQK (198 aa)) constitute a DH domain. One can recognise a PH domain in the interval 593–696 (NVLEPGRVLI…WTDDLTKAQY (104 aa)). Zn(2+) contacts are provided by C810, C823, C826, C831, C834, C851, and C854. Residues 810–859 (CSTEFNIINRRHHCRDCGWLICKFCKGQAPLSKYDFTKQNVCSECFDRHY) form an FYVE-type; degenerate zinc finger.

The protein resides in the cytoplasm. Its subcellular location is the cytoskeleton. Functionally, activates cdc-42, a member of the Ras-like family of Rho- and Rac proteins, by exchanging bound GDP for free GTP. May play a role in regulating the actin cytoskeleton and cell shape. Required for normal lifespan. This Caenorhabditis elegans protein is FYVE, RhoGEF and PH domain-containing protein tag-77.